Reading from the N-terminus, the 261-residue chain is X-box-binding protein 1 (261 aa).

The Cytoplasmic segment spans residues 1–185; the sequence is MVVVAPAQSP…VQAQLSPLQN (185 aa). A compositionally biased stretch (low complexity) spans 27-37; sequence TGGAPAGRALP. The tract at residues 27 to 65 is disordered; sequence TGGAPAGRALPVMVPGQQGASPEGASGVPPQARKRQRLT. Phosphoserine occurs at positions 47 and 68. In terms of domain architecture, bZIP spans 70 to 133; that stretch reads EEKALRRKLK…HGLVVENQEL (64 aa). The interval 72–94 is basic motif; it reads KALRRKLKNRVAAQTARDRKKAR. The interval 76-92 is nuclear localization signal (NLS); that stretch reads RKLKNRVAAQTARDRKK. A leucine-zipper region spans residues 98-133; it reads LEQQVVDLEEENQKLLLENQLLREKTHGLVVENQEL. The chain crosses the membrane as a helical; Signal-anchor for type II membrane protein span at residues 186–203; the sequence is ISPWTLMALTLQTLSLTS. Over 204-261 the chain is Lumenal; it reads CWAFCSTWTQSCSSDVLPQSLPAWSSSQKWTQKDPVPYRPPLLHPWGRHQPSWKPLMN.

It belongs to the bZIP family. In terms of assembly, isoform 1 interacts with HM13. Isoform 1 interacts with RNF139; the interaction induces ubiquitination and degradation of isoform 1. Isoform 1 interacts (via luminal domain) with DERL1; the interaction obviates the need for ectodomain shedding prior HM13/SPP-mediated XBP1 isoform 1 cleavage. Isoform 1 interacts with HDAC3 and AKT1; the interactions occur in endothelial cell (EC) under disturbed flow. Isoform 1 interacts with the oncoprotein FOS. Interacts with SIRT1. Isoform 1 is ubiquitinated, leading to proteasome-mediated degradation in response to ER stress. Post-translationally, X-box-binding protein 1, cytoplasmic form and luminal form are produced by intramembrane proteolytic cleavage of ER membrane-anchored isoform 1 triggered by HM13/SPP in a DERL1-RNF139-dependent and VCP/p97-independent manner. X-box-binding protein 1, luminal form is ubiquitinated leading to proteasomal degradation. In terms of processing, acetylated by EP300; acetylation positively regulates the transcriptional activity of XBP1. Deacetylated by SIRT1; deacetylation negatively regulates the transcriptional activity of XBP1.

It localises to the nucleus. The protein resides in the endoplasmic reticulum. It is found in the cytoplasm. The protein localises to the endoplasmic reticulum membrane. Its subcellular location is the membrane. Functionally, functions as a transcription factor during endoplasmic reticulum (ER) stress by regulating the unfolded protein response (UPR). Required for cardiac myogenesis and hepatogenesis during embryonic development, and the development of secretory tissues such as exocrine pancreas and salivary gland. Involved in terminal differentiation of B lymphocytes to plasma cells and production of immunoglobulins. Modulates the cellular response to ER stress in a PIK3R-dependent manner. Binds to the cis-acting X box present in the promoter regions of major histocompatibility complex class II genes. Involved in VEGF-induced endothelial cell (EC) proliferation and retinal blood vessel formation during embryonic development but also for angiogenesis in adult tissues under ischemic conditions. Functions also as a major regulator of the UPR in obesity-induced insulin resistance and type 2 diabetes for the management of obesity and diabetes prevention. In terms of biological role, acts as a weak transcriptional factor. Together with HDAC3, contributes to the activation of NFE2L2-mediated HMOX1 transcription factor gene expression in a PI(3)K/mTORC2/Akt-dependent signaling pathway leading to EC survival under disturbed flow/oxidative stress. Binds to the ER stress response element (ERSE) upon ER stress. Binds to the consensus 5'-GATGACGTG[TG]N(3)[AT]T-3' sequence related to cAMP responsive element (CRE)-like sequences. Associates preferentially to the HDAC3 gene promoter region in a static flow-dependent manner. Binds to the CDH5/VE-cadherin gene promoter region. This chain is X-box-binding protein 1, found in Bos taurus (Bovine).